The sequence spans 537 residues: Mitochondria-eating protein (537 aa).

The interaction with YWHAG/14-3-3 protein gamma stretch occupies residues 1-270 (MAESLKKLAK…SHSRSRSHSR (270 aa)). Phosphoserine is present on residues Ser-13, Ser-85, Ser-123, Ser-127, Ser-154, and Ser-157. Residues 109–150 (SKNRDNSPDQDQHQSDNESFSETQPTQVQDDLAESGKSLEGA) are disordered. Positions 110-124 (KNRDNSPDQDQHQSD) are enriched in basic and acidic residues. The span at 125 to 137 (NESFSETQPTQVQ) shows a compositional bias: polar residues. Coiled coils occupy residues 152–184 (NGSTISLLAAEEEINQLKKQLKSLQAQEDARHK) and 210–243 (QDVVSNYEKHLQNLKEEIAVLSAEKSGLQGRSAR). Disordered regions lie at residues 171–212 (QLKS…PQDV) and 233–291 (EKSG…RAKM). Basic and acidic residues predominate over residues 179 to 209 (EDARHKTSENRRSEALKSDHRSTKRTQDQRP). The span at 239–251 (GRSARSPSPSTGT) shows a compositional bias: low complexity. Residues 252–269 (RSHRRGRSRSHSRSRSHS) are compositionally biased toward basic residues. 3 positions are modified to phosphoserine: Ser-283, Ser-285, and Ser-508.

This sequence belongs to the MIEAP family. Interacts (via coiled-coil domains) with BNIP3L (via BH3 domain). Interacts (via coiled-coil domains) with BNIP3 (via BH3 domain). Interacts with YWHAG/14-3-3 protein gamma; a protein that also plays a role in MALM. In testis, expressed primarily in spermatids.

The protein localises to the cytoplasm. The protein resides in the cytosol. It localises to the mitochondrion outer membrane. It is found in the mitochondrion matrix. Functionally, key regulator of mitochondrial quality that mediates the repairing or degradation of unhealthy mitochondria in response to mitochondrial damage. Mediator of mitochondrial protein catabolic process (also named MALM) by mediating the degradation of damaged proteins inside mitochondria by promoting the accumulation in the mitochondrial matrix of hydrolases that are characteristic of the lysosomal lumen. Also involved in mitochondrion degradation of damaged mitochondria by promoting the formation of vacuole-like structures (named MIV), which engulf and degrade unhealthy mitochondria by accumulating lysosomes. The physical interaction of SPATA18/MIEAP, BNIP3 and BNIP3L/NIX at the mitochondrial outer membrane regulates the opening of a pore in the mitochondrial double membrane in order to mediate the translocation of lysosomal proteins from the cytoplasm to the mitochondrial matrix. Binds cardiolipin. May form molecular condensates (non-membrane-bounded organelles) within mitochondria that compartmentalize and promote cardiolipin metabolism. In Mus musculus (Mouse), this protein is Mitochondria-eating protein (Spata18).